Reading from the N-terminus, the 308-residue chain is MTALQHVAVLMGGWSSEREVSLRSGAACAAALERKGYRVTRIDVQRDIATVLQNLKPDVALVMLHGKPGEDGTIQGVLETLGIPYSHSGVLSSSLAMRKDLAKTVMATAGVPVAEGLTLTRAEIAKAHVMAPPYVIKPVADGSSVGVFIVTEDQAHPPQELFRDDWPHGEELLVEKYIAGRELTCAVIKGEASDVIEIVPLLKFYDYEAKYSKGASKHVLPAPVLPFVYQEVRRLTLAAHGALGCRGVSRADFRYDDRIEGTGGLVCLEVNTQPGMTETSLVPELAGYAGVAFDELVQWMVEDASLDR.

The region spanning 103 to 302 (KTVMATAGVP…FDELVQWMVE (200 aa)) is the ATP-grasp domain. Residue 130 to 184 (MAPPYVIKPVADGSSVGVFIVTEDQAHPPQELFRDDWPHGEELLVEKYIAGRELT) participates in ATP binding. Mg(2+)-binding residues include Asp-252, Glu-269, and Asn-271.

This sequence belongs to the D-alanine--D-alanine ligase family. The cofactor is Mg(2+). Mn(2+) is required as a cofactor.

It localises to the cytoplasm. The catalysed reaction is 2 D-alanine + ATP = D-alanyl-D-alanine + ADP + phosphate + H(+). It functions in the pathway cell wall biogenesis; peptidoglycan biosynthesis. Functionally, cell wall formation. This is D-alanine--D-alanine ligase from Afipia carboxidovorans (strain ATCC 49405 / DSM 1227 / KCTC 32145 / OM5) (Oligotropha carboxidovorans).